The chain runs to 353 residues: Outer membrane protein P2 (353 aa).

An N-terminal signal peptide occupies residues 1 to 20 (MKKTLAALIVGAFAASAANA).

Belongs to the Gram-negative porin family. In terms of assembly, homotrimer.

Its subcellular location is the cell outer membrane. Forms pores that allow passive diffusion of small molecules across the outer membrane. This chain is Outer membrane protein P2 (ompP2), found in Haemophilus influenzae.